The primary structure comprises 294 residues: Undecaprenyl-diphosphatase (294 aa).

The next 6 helical transmembrane spans lie at 39-59 (PGAAFTAIIQIGTELAVILYF), 93-113 (ATLGWNIIVGSIPIIILGFTL), 123-143 (NLWITVTVLLVFGILLWMVDA), 198-218 (SFLMAIPAVFGSGLLEAIKAV), 232-252 (PTLVAMVISFVLGYIVIIGFL), and 268-288 (IGLAVVVALLLIVGVLPAIDP).

The protein belongs to the UppP family.

It is found in the cell membrane. The catalysed reaction is di-trans,octa-cis-undecaprenyl diphosphate + H2O = di-trans,octa-cis-undecaprenyl phosphate + phosphate + H(+). Functionally, catalyzes the dephosphorylation of undecaprenyl diphosphate (UPP). Confers resistance to bacitracin. The polypeptide is Undecaprenyl-diphosphatase (Bifidobacterium longum (strain DJO10A)).